The sequence spans 159 residues: Ribosomal RNA large subunit methyltransferase H (159 aa).

Residues L76, G108, and 127-132 each bind S-adenosyl-L-methionine; that span reads FGLLTF.

Belongs to the RNA methyltransferase RlmH family. Homodimer.

It is found in the cytoplasm. The enzyme catalyses pseudouridine(1915) in 23S rRNA + S-adenosyl-L-methionine = N(3)-methylpseudouridine(1915) in 23S rRNA + S-adenosyl-L-homocysteine + H(+). In terms of biological role, specifically methylates the pseudouridine at position 1915 (m3Psi1915) in 23S rRNA. This Streptococcus thermophilus (strain ATCC BAA-491 / LMD-9) protein is Ribosomal RNA large subunit methyltransferase H.